The following is a 321-amino-acid chain: MHKYQTHWVEHSIVKILSSTGKKHIALMVGGMSAEREVSLVSSEGVSKALIELGYRVTFIDMGADIAVRLQEIKPDIVFNCLHGTYGEDGCLPGLLNIMRIPYTHSGMLSSALAFDKIHSRIWFLTNNINMAESIVVNKSDNIKNDPMKRPYVIKPLTQGSSIGVEVIFAEDDFNFADYDFPYGDQVIIEQYIKGRELQVAVLNGKALGALEIKLLKNRFYDYETKYTEGFADHLCPAPLPANLYEKLLIESEKIYKTMNCKGPARAEFILEEQTNKLYALEINTHPGMTPLSIVPEIAAYAGINFTNLIEEIIKMASFES.

The 195-residue stretch at 121-315 (RIWFLTNNIN…FTNLIEEIIK (195 aa)) folds into the ATP-grasp domain. 147-199 (PMKRPYVIKPLTQGSSIGVEVIFAEDDFNFADYDFPYGDQVIIEQYIKGRELQ) provides a ligand contact to ATP. The Mg(2+) site is built by Glu-268, Glu-282, and Asn-284.

Belongs to the D-alanine--D-alanine ligase family. The cofactor is Mg(2+). Mn(2+) serves as cofactor.

The protein resides in the cytoplasm. The catalysed reaction is 2 D-alanine + ATP = D-alanyl-D-alanine + ADP + phosphate + H(+). The protein operates within cell wall biogenesis; peptidoglycan biosynthesis. Functionally, cell wall formation. In Rickettsia africae (strain ESF-5), this protein is D-alanine--D-alanine ligase.